A 583-amino-acid polypeptide reads, in one-letter code: Potassium-transporting ATPase potassium-binding subunit (583 aa).

10 consecutive transmembrane segments (helical) span residues 3–23 (NIIW…WPLG), 66–86 (MACV…LLMA), 135–155 (GLTV…FALI), 177–197 (VLYI…EQGV), 266–286 (LEML…GAKI), 293–313 (VAIF…TVQA), 402–422 (GLYG…LMVG), 440–460 (AVVV…LMCL), 506–526 (VLLG…ILAM), and 549–569 (LFIF…FFPA).

It belongs to the KdpA family. In terms of assembly, the system is composed of three essential subunits: KdpA, KdpB and KdpC.

The protein localises to the cell inner membrane. Part of the high-affinity ATP-driven potassium transport (or Kdp) system, which catalyzes the hydrolysis of ATP coupled with the electrogenic transport of potassium into the cytoplasm. This subunit binds the periplasmic potassium ions and delivers the ions to the membrane domain of KdpB through an intramembrane tunnel. The protein is Potassium-transporting ATPase potassium-binding subunit of Desulfovibrio desulfuricans (strain ATCC 27774 / DSM 6949 / MB).